The sequence spans 65 residues: Beta-defensin 106A (65 aa).

The signal sequence occupies residues Met-1–Ala-20. 3 disulfides stabilise this stretch: Cys-26-Cys-53, Cys-33-Cys-47, and Cys-37-Cys-54.

It belongs to the beta-defensin family. Monomer. Interacts with CCR2 (via extracellular N-terminal region); this interaction may preferentially require specific tyrosine sulfation on CCR2.

The protein localises to the secreted. The protein resides in the membrane. In terms of biological role, has antibacterial activity. Acts as a ligand for C-C chemokine receptor CCR2. The chain is Beta-defensin 106A (DEFB106A) from Hylobates lar (Lar gibbon).